A 636-amino-acid chain; its full sequence is Carbon monoxide dehydrogenase 2 (636 aa).

[4Fe-4S] cluster is bound by residues Cys-39, Cys-47, Cys-48, Cys-51, Cys-56, and Cys-70. Residues His-261, Cys-295, Cys-333, Cys-446, Cys-476, and Cys-526 each contribute to the [Ni-4Fe-5S] cluster site.

Belongs to the Ni-containing carbon monoxide dehydrogenase family. As to quaternary structure, homodimer. The cofactor is [4Fe-4S] cluster. It depends on [Ni-4Fe-5S] cluster as a cofactor.

It is found in the cytoplasm. The protein localises to the cell membrane. It carries out the reaction CO + 2 oxidized [2Fe-2S]-[ferredoxin] + H2O = 2 reduced [2Fe-2S]-[ferredoxin] + CO2 + 2 H(+). Its activity is regulated as follows. Inactivated by O(2). Its function is as follows. CODH oxidizes carbon monoxide coupled, via CooF, to the reduction of a hydrogen cation by a hydrogenase (possibly CooH). The protein is Carbon monoxide dehydrogenase 2 (cooS2) of Carboxydothermus hydrogenoformans (strain ATCC BAA-161 / DSM 6008 / Z-2901).